The primary structure comprises 406 residues: Tyrosine--tRNA ligase (406 aa).

Residue Tyr39 coordinates L-tyrosine. Residues 44–53 carry the 'HIGH' region motif; it reads PTADSLHVGH. L-tyrosine is bound by residues Tyr172 and Gln176. Positions 232–236 match the 'KMSKS' region motif; it reads KMGKT. ATP is bound at residue Lys235. Residues 344 to 404 enclose the S4 RNA-binding domain; that stretch reads KELLDVLVDR…LGKKKFYNIV (61 aa).

Belongs to the class-I aminoacyl-tRNA synthetase family. TyrS type 1 subfamily. Homodimer.

Its subcellular location is the cytoplasm. The enzyme catalyses tRNA(Tyr) + L-tyrosine + ATP = L-tyrosyl-tRNA(Tyr) + AMP + diphosphate + H(+). Catalyzes the attachment of tyrosine to tRNA(Tyr) in a two-step reaction: tyrosine is first activated by ATP to form Tyr-AMP and then transferred to the acceptor end of tRNA(Tyr). This Fusobacterium nucleatum subsp. nucleatum (strain ATCC 25586 / DSM 15643 / BCRC 10681 / CIP 101130 / JCM 8532 / KCTC 2640 / LMG 13131 / VPI 4355) protein is Tyrosine--tRNA ligase.